Here is a 128-residue protein sequence, read N- to C-terminus: Large ribosomal subunit protein bL17 (128 aa).

The protein belongs to the bacterial ribosomal protein bL17 family. As to quaternary structure, part of the 50S ribosomal subunit. Contacts protein L32.

This chain is Large ribosomal subunit protein bL17, found in Pseudomonas fluorescens (strain Pf0-1).